The chain runs to 388 residues: MNLHEYQAKALLKEYGMPVQEGILATNADEAVAAFEQLGGKFAVMKAQVHAGGRGKAGGVKVAKSKEDVIEFANNIIGTRLVTYQTDANGQPVNSIIVAEDVYPVERELYLGAVVDRSSRRITFMASTEGGVEIEKVAEETPEKIIKVEVDPLVGLQPFQAREVAFALGLKDKQIGQFVKIMTAAYQAFVENDFALFEINPLSVRENGEILCVDAKVGIDSNALYRLPKVAALRDKSQENERELKASEFDLNYVALEGNIGCMVNGAGLAMATMDIIKLYGGQPANFLDVGGGATKERVIEAFKIILADTSVQGVLINIFGGIVRCDMIAEAIIAAVQEVNVTVPVVVRLEGNNAELGAKLLDESGLKLISANGLSDAAEKVVAAVKA.

In terms of domain architecture, ATP-grasp spans 9–245 (KALLKEYGMP…KSQENERELK (237 aa)). ATP contacts are provided by residues Lys-46, 53-55 (GRG), Glu-100, Tyr-103, and Glu-108. Mg(2+)-binding residues include Asn-200 and Asp-214. Substrate-binding positions include Asn-265 and 322-324 (GIV).

It belongs to the succinate/malate CoA ligase beta subunit family. Heterotetramer of two alpha and two beta subunits. It depends on Mg(2+) as a cofactor.

The catalysed reaction is succinate + ATP + CoA = succinyl-CoA + ADP + phosphate. The enzyme catalyses GTP + succinate + CoA = succinyl-CoA + GDP + phosphate. The protein operates within carbohydrate metabolism; tricarboxylic acid cycle; succinate from succinyl-CoA (ligase route): step 1/1. Its function is as follows. Succinyl-CoA synthetase functions in the citric acid cycle (TCA), coupling the hydrolysis of succinyl-CoA to the synthesis of either ATP or GTP and thus represents the only step of substrate-level phosphorylation in the TCA. The beta subunit provides nucleotide specificity of the enzyme and binds the substrate succinate, while the binding sites for coenzyme A and phosphate are found in the alpha subunit. The polypeptide is Succinate--CoA ligase [ADP-forming] subunit beta (Acinetobacter baumannii (strain AB307-0294)).